The following is a 211-amino-acid chain: Guanylate kinase (211 aa).

The Guanylate kinase-like domain maps to 7-187 (GLLIILSGPS…AADRIIAIIR (181 aa)). Residue 14 to 21 (GPSGVGKA) participates in ATP binding.

Belongs to the guanylate kinase family.

It localises to the cytoplasm. It carries out the reaction GMP + ATP = GDP + ADP. Functionally, essential for recycling GMP and indirectly, cGMP. The sequence is that of Guanylate kinase from Aster yellows witches'-broom phytoplasma (strain AYWB).